A 439-amino-acid polypeptide reads, in one-letter code: Ribosomal protein uS12 methylthiotransferase RimO (439 aa).

Residues 7–119 (KQLCLISLGC…IDILIAKKQN (113 aa)) enclose the MTTase N-terminal domain. [4Fe-4S] cluster is bound by residues Cys-16, Cys-50, Cys-82, Cys-151, Cys-155, and Cys-158. The region spanning 137–368 (TGSSVHAYVK…ALKHQNHSFK (232 aa)) is the Radical SAM core domain.

The protein belongs to the methylthiotransferase family. RimO subfamily. [4Fe-4S] cluster serves as cofactor.

It localises to the cytoplasm. It carries out the reaction L-aspartate(89)-[ribosomal protein uS12]-hydrogen + (sulfur carrier)-SH + AH2 + 2 S-adenosyl-L-methionine = 3-methylsulfanyl-L-aspartate(89)-[ribosomal protein uS12]-hydrogen + (sulfur carrier)-H + 5'-deoxyadenosine + L-methionine + A + S-adenosyl-L-homocysteine + 2 H(+). Its function is as follows. Catalyzes the methylthiolation of an aspartic acid residue of ribosomal protein uS12. The protein is Ribosomal protein uS12 methylthiotransferase RimO of Helicobacter pylori (strain J99 / ATCC 700824) (Campylobacter pylori J99).